The primary structure comprises 75 residues: UPF0270 protein PFL_4336 (75 aa).

This sequence belongs to the UPF0270 family.

In Pseudomonas fluorescens (strain ATCC BAA-477 / NRRL B-23932 / Pf-5), this protein is UPF0270 protein PFL_4336.